The following is a 356-amino-acid chain: Histidine biosynthesis bifunctional protein HisB (356 aa).

Residues 1 to 166 (MSKKVLFIDR…AICNYLTSLN (166 aa)) are histidinol-phosphatase. Asp-9 functions as the Nucleophile in the catalytic mechanism. Mg(2+)-binding residues include Asp-9 and Asp-11. Asp-11 (proton donor) is an active-site residue. Residues Cys-93, His-95, Cys-101, and Cys-103 each coordinate Zn(2+). Asp-130 is a Mg(2+) binding site. The interval 167–356 (RYAHVKRITK…VLPSSKGVLS (190 aa)) is imidazoleglycerol-phosphate dehydratase.

In the N-terminal section; belongs to the histidinol-phosphatase family. It in the C-terminal section; belongs to the imidazoleglycerol-phosphate dehydratase family. Requires Mg(2+) as cofactor. Zn(2+) serves as cofactor.

The protein resides in the cytoplasm. The enzyme catalyses D-erythro-1-(imidazol-4-yl)glycerol 3-phosphate = 3-(imidazol-4-yl)-2-oxopropyl phosphate + H2O. It catalyses the reaction L-histidinol phosphate + H2O = L-histidinol + phosphate. It functions in the pathway amino-acid biosynthesis; L-histidine biosynthesis; L-histidine from 5-phospho-alpha-D-ribose 1-diphosphate: step 6/9. It participates in amino-acid biosynthesis; L-histidine biosynthesis; L-histidine from 5-phospho-alpha-D-ribose 1-diphosphate: step 8/9. The polypeptide is Histidine biosynthesis bifunctional protein HisB (Baumannia cicadellinicola subsp. Homalodisca coagulata).